The sequence spans 364 residues: UDP-N-acetylenolpyruvoylglucosamine reductase (364 aa).

Residues 30–196 form the FAD-binding PCMH-type domain; the sequence is LGGPATRLIT…LRVRFELEDA (167 aa). The active site involves arginine 173. Serine 252 serves as the catalytic Proton donor. Residue glutamate 356 is part of the active site.

The protein belongs to the MurB family. FAD serves as cofactor.

The protein resides in the cytoplasm. It catalyses the reaction UDP-N-acetyl-alpha-D-muramate + NADP(+) = UDP-N-acetyl-3-O-(1-carboxyvinyl)-alpha-D-glucosamine + NADPH + H(+). Its pathway is cell wall biogenesis; peptidoglycan biosynthesis. In terms of biological role, cell wall formation. The sequence is that of UDP-N-acetylenolpyruvoylglucosamine reductase from Streptomyces avermitilis (strain ATCC 31267 / DSM 46492 / JCM 5070 / NBRC 14893 / NCIMB 12804 / NRRL 8165 / MA-4680).